Reading from the N-terminus, the 262-residue chain is Small ribosomal subunit protein eS1 (262 aa).

Belongs to the eukaryotic ribosomal protein eS1 family. In terms of assembly, component of the small ribosomal subunit. Mature ribosomes consist of a small (40S) and a large (60S) subunit. The 40S subunit contains about 33 different proteins and 1 molecule of RNA (18S). The 60S subunit contains about 49 different proteins and 3 molecules of RNA (25S, 5.8S and 5S).

It is found in the cytoplasm. The chain is Small ribosomal subunit protein eS1 from Plasmodium knowlesi (strain H).